A 145-amino-acid chain; its full sequence is MLDVGMTELLCFAIIAILVLGPEKLPEAARFAGRWYVRLKRYITNLQNEIDQELRLSEFRKEMQEELNRIEALERKVQQQLDEIQKQQVSESLEVTETAKTTQKPIWKCTPISGHYKVPYLTKVTSLAAQTDISETSPVELKIAV.

A helical membrane pass occupies residues 1 to 21 (MLDVGMTELLCFAIIAILVLG).

Belongs to the TatB family. In terms of assembly, the Tat system comprises two distinct complexes: a TatABC complex, containing multiple copies of TatA, TatB and TatC subunits, and a separate TatA complex, containing only TatA subunits. Substrates initially bind to the TatABC complex, which probably triggers association of the separate TatA complex to form the active translocon.

Its subcellular location is the cell inner membrane. In terms of biological role, part of the twin-arginine translocation (Tat) system that transports large folded proteins containing a characteristic twin-arginine motif in their signal peptide across membranes. Together with TatC, TatB is part of a receptor directly interacting with Tat signal peptides. TatB may form an oligomeric binding site that transiently accommodates folded Tat precursor proteins before their translocation. The polypeptide is Sec-independent protein translocase protein TatB (Acinetobacter baumannii (strain ATCC 17978 / DSM 105126 / CIP 53.77 / LMG 1025 / NCDC KC755 / 5377)).